The primary structure comprises 497 residues: Protein adenylyltransferase Fic (497 aa).

Positions 1-30 (MGATDQALEAESKTTEPPKTPPVPEQHDRP) are disordered. The chain crosses the membrane as a helical span at residues 38-58 (LCHLLVLLFSGGLAAITLHIF). TPR repeat units lie at residues 123–156 (ALGALRLAQDMYLAGKDDKAARLFQHSLALAPRH) and 157–191 (PTVLLRYGEFLEHSQRNIVLADQYYFQALSISPSN). The Inhibitory (S/T)XXXE(G/N) motif signature appears at 248–253 (TVGIEG). ATP contacts are provided by residues E252 and 333–336 (VGGH). The Fido domain occupies 302 to 437 (ITIKDILELH…IRPFVRFIAD (136 aa)). H380 is a catalytic residue. Residues 384 to 391 (DGNGRTSR), 416 to 417 (YY), and N424 each bind ATP. The interval 468–497 (GEGVPQLQSSQMGGGASIPEFHESGSGSLP) is disordered.

The protein belongs to the fic family. In terms of assembly, homodimer.

Its subcellular location is the membrane. The catalysed reaction is L-tyrosyl-[protein] + ATP = O-(5'-adenylyl)-L-tyrosyl-[protein] + diphosphate. It catalyses the reaction L-threonyl-[protein] + ATP = 3-O-(5'-adenylyl)-L-threonyl-[protein] + diphosphate. The enzyme catalyses 3-O-(5'-adenylyl)-L-threonyl-[protein] + H2O = L-threonyl-[protein] + AMP + H(+). Its activity is regulated as follows. The side chain of Glu-252 determines which of the two opposing activities (AMPylase or de-AMPylase) will take place. In response to endoplasmic reticulum stress, mediates de-AMPylase activity. Adenylyltransferase activity is inhibited by the inhibitory helix present at the N-terminus: Glu-252 binds ATP and competes with ATP-binding at Arg-391, thereby preventing adenylyltransferase activity. In unstressed cells, disengagement of Glu-252 promotes adenylyltransferase activity. Activation dissociates ATP-binding from Glu-252, allowing ordered binding of the entire ATP moiety with the alpha-phosphate in an orientation that is productive for accepting an incoming target hydroxyl side chain. Functionally, protein that can both mediate the addition of adenosine 5'-monophosphate (AMP) to specific residues of target proteins (AMPylation), and the removal of the same modification from target proteins (de-AMPylation), depending on the context. The side chain of Glu-252 determines which of the two opposing activities (AMPylase or de-AMPylase) will take place. Acts as a key regulator of the unfolded protein response (UPR) by mediating AMPylation or de-AMPylation of Hsc70-3/BiP. In unstressed cells, acts as an adenylyltransferase by mediating AMPylation of Hsc70-3/BiP at 'Thr-518', thereby inactivating it. In response to endoplasmic reticulum stress, acts as a phosphodiesterase by mediating removal of ATP (de-AMPylation) from Hsc70-3/BiP at 'Thr-518', leading to restore HSPA5/BiP activity. The protein is Protein adenylyltransferase Fic of Drosophila ananassae (Fruit fly).